The sequence spans 360 residues: MIIYATAVQTINSFVRLESLKEVYGLIWIFVPIFSLVLGIITGVLVIVWLEREISAGIQQRIGPEYAGPLGILQALADGTKLLFKENLRPSRGNTPLFSIGPSIAVISILLSYSVIPFSNHLVLADLNIGIFLWIAISSIAPIGLLMSGYGSNNKYSFLGGLRAAAQSISYEIPLTLCVLSISLLSNSLSTVDIVEAQSKYGFWGWNLWRQPIGFIIFLISSLAECERLPFDLPEAEEELIAGYQTEYSGIKFGLFYVASYLNLLISSLFVTVLYLGGWNISIPYISILELFQRDQIFGTTIGIFITLAKTYLFLFISIATRWTLPRLRMDQLLNLGWKFLLPISLGNLLLTTSFQLFSL.

9 consecutive transmembrane segments (helical) span residues 27–47, 98–118, 129–149, 165–185, 203–223, 248–268, 269–289, 297–317, and 340–360; these read IWIFVPIFSLVLGIITGVLVI, FSIGPSIAVISILLSYSVIPF, IGIFLWIAISSIAPIGLLMSG, AAQSISYEIPLTLCVLSISLL, FWGWNLWRQPIGFIIFLISSL, YSGIKFGLFYVASYLNLLISS, LFVTVLYLGGWNISIPYISIL, IFGTTIGIFITLAKTYLFLFI, and FLLPISLGNLLLTTSFQLFSL.

This sequence belongs to the complex I subunit 1 family. In terms of assembly, NDH is composed of at least 16 different subunits, 5 of which are encoded in the nucleus.

It is found in the plastid. It localises to the chloroplast thylakoid membrane. It catalyses the reaction a plastoquinone + NADH + (n+1) H(+)(in) = a plastoquinol + NAD(+) + n H(+)(out). It carries out the reaction a plastoquinone + NADPH + (n+1) H(+)(in) = a plastoquinol + NADP(+) + n H(+)(out). Functionally, NDH shuttles electrons from NAD(P)H:plastoquinone, via FMN and iron-sulfur (Fe-S) centers, to quinones in the photosynthetic chain and possibly in a chloroplast respiratory chain. The immediate electron acceptor for the enzyme in this species is believed to be plastoquinone. Couples the redox reaction to proton translocation, and thus conserves the redox energy in a proton gradient. This chain is NAD(P)H-quinone oxidoreductase subunit 1, chloroplastic, found in Lepidium virginicum (Virginia pepperweed).